Consider the following 113-residue polypeptide: Photosystem II reaction center Psb28 protein (113 aa).

The protein belongs to the Psb28 family. In terms of assembly, part of the photosystem II complex.

It localises to the cellular thylakoid membrane. This Nostoc punctiforme (strain ATCC 29133 / PCC 73102) protein is Photosystem II reaction center Psb28 protein.